The sequence spans 773 residues: Cytochrome c oxidase subunit 1+2 (773 aa).

A COX1 region spans residues 1–491; that stretch reads MKLLEIYDKQ…LIASYGSLIT (491 aa). Residues 41–61 form a helical membrane-spanning segment; the sequence is TMYITFSIFAGIIGTLLSLVI. Position 64 (glutamate 64) interacts with Ca(2+). Histidine 85 lines the Fe(II)-heme a pocket. 6 consecutive transmembrane segments (helical) span residues 87-111, 130-150, 173-193, 211-231, 262-278, and 290-310; these read LIMI…NWFL, LWLI…GIGA, VGIL…INFL, LFVW…PVLA, LFHP…FGII, and IFGV…GFLV. Histidine 264 is a Cu cation binding site. A cross-link (1'-histidyl-3'-tyrosine (His-Tyr)) is located at residues 264-268; it reads HPEVY. O2 is bound at residue tyrosine 268. Cu cation-binding residues include histidine 314 and histidine 315. 2 helical membrane-spanning segments follow: residues 335–355 and 362–382; these read IIAI…WGGV and MLFV…GVVL. 2 residues coordinate Mg(2+): histidine 392 and aspartate 393. The next 5 membrane-spanning stretches (helical) occupy residues 396–416, 444–464, 483–503, 555–575, and 604–624; these read YVVA…IFAG, FWTM…LGLA, IASY…VNIF, IFFY…RILW, and GTVI…LIAI. Histidine 400 contributes to the heme a3 binding site. Histidine 402 serves as a coordination point for Fe(II)-heme a. The segment at 492-773 is COX2; that stretch reads AFGLLFFFVN…VQEYLGRLYK (282 aa). Histidine 709, cysteine 744, cysteine 748, and histidine 752 together coordinate Cu cation.

It in the N-terminal section; belongs to the heme-copper respiratory oxidase family. This sequence in the C-terminal section; belongs to the cytochrome c oxidase subunit 2 family. In terms of assembly, component of the cytochrome c oxidase (complex IV, CIV), a multisubunit enzyme composed of a catalytic core of 3 subunits and several supernumerary subunits. The complex exists as a monomer or a dimer and forms supercomplexes (SCs) in the inner mitochondrial membrane with ubiquinol-cytochrome c oxidoreductase (cytochrome b-c1 complex, complex III, CIII). Heme is required as a cofactor. The cofactor is Cu cation.

Its subcellular location is the mitochondrion inner membrane. The catalysed reaction is 4 Fe(II)-[cytochrome c] + O2 + 8 H(+)(in) = 4 Fe(III)-[cytochrome c] + 2 H2O + 4 H(+)(out). The protein operates within energy metabolism; oxidative phosphorylation. Functionally, component of the cytochrome c oxidase, the last enzyme in the mitochondrial electron transport chain which drives oxidative phosphorylation. The respiratory chain contains 3 multisubunit complexes succinate dehydrogenase (complex II, CII), ubiquinol-cytochrome c oxidoreductase (cytochrome b-c1 complex, complex III, CIII) and cytochrome c oxidase (complex IV, CIV), that cooperate to transfer electrons derived from NADH and succinate to molecular oxygen, creating an electrochemical gradient over the inner membrane that drives transmembrane transport and the ATP synthase. Cytochrome c oxidase is the component of the respiratory chain that catalyzes the reduction of oxygen to water. Electrons originating from reduced cytochrome c in the intermembrane space (IMS) are transferred via the dinuclear copper A center (CU(A)) of subunit 2 and heme A of subunit 1 to the active site in subunit 1, a binuclear center (BNC) formed by heme A3 and copper B (CU(B)). The BNC reduces molecular oxygen to 2 water molecules using 4 electrons from cytochrome c in the IMS and 4 protons from the mitochondrial matrix. In Dictyostelium citrinum (Slime mold), this protein is Cytochrome c oxidase subunit 1+2 (cox1/2).